The primary structure comprises 609 residues: UvrABC system protein C (609 aa).

Residues 15 to 92 (TGSGVYQMQD…IKQFRPRYNV (78 aa)) form the GIY-YIG domain. One can recognise a UVR domain in the interval 202–237 (DQVIIKLTERMEVASENLVFEEAAHYRDQIRQLRRL).

Belongs to the UvrC family. In terms of assembly, interacts with UvrB in an incision complex.

The protein localises to the cytoplasm. Functionally, the UvrABC repair system catalyzes the recognition and processing of DNA lesions. UvrC both incises the 5' and 3' sides of the lesion. The N-terminal half is responsible for the 3' incision and the C-terminal half is responsible for the 5' incision. In Coxiella burnetii (strain RSA 331 / Henzerling II), this protein is UvrABC system protein C.